The primary structure comprises 621 residues: Threonine--tRNA ligase (621 aa).

The interval 1 to 137 (MRILQLHCDS…ESSKVVTKDS (137 aa)) is editing domain. The tract at residues 128–150 (ESSKVVTKDSTTKDDDEDTSDAL) is disordered. Residues 202–501 (PHVALMKKLA…SKKGKKPQLP (300 aa)) form a catalytic region. Cys294, His346, and His470 together coordinate Zn(2+). A compositionally biased stretch (polar residues) spans 598–612 (QTSGKPYTGLNQSQH). Residues 598–621 (QTSGKPYTGLNQSQHLSKRPQLMV) are disordered.

This sequence belongs to the class-II aminoacyl-tRNA synthetase family. As to quaternary structure, homodimer. The cofactor is Zn(2+).

The protein resides in the cytoplasm. It catalyses the reaction tRNA(Thr) + L-threonine + ATP = L-threonyl-tRNA(Thr) + AMP + diphosphate + H(+). Catalyzes the attachment of threonine to tRNA(Thr) in a two-step reaction: L-threonine is first activated by ATP to form Thr-AMP and then transferred to the acceptor end of tRNA(Thr). Also edits incorrectly charged L-seryl-tRNA(Thr). This is Threonine--tRNA ligase from Nitrosopumilus maritimus (strain SCM1).